A 403-amino-acid polypeptide reads, in one-letter code: MVRTSIKSIGSGIDRLSALPEHLLCRILSELSTKDSVRTSVLSKHWRNLWLHVPVLELETSDFPDNLVFREFIDRFVGFDKEIDLKSFDIFYDVNVLWYDDFLWMIDDVVKRRVCDLMVTNNPYVVNEKLVKMPISLYSCATLVNLNLSFVAMNNLPSESVCLPRVKTLYLHGVKLDGDSILGTLVSSCSVLEDLTVVTHPGDYEKVVCFRSQSVKSFTIESQCEYKDPNVEIDCPRLEYMCIREYQSESFVVHSIGPYAKVDVDIFFEVEYEDPLAISMIRNFLTGISKVREMTISSRTLEVIRGYHSMVKALPQFSNLSSLDALLVESYWELLPVFLGCCINLNSLVVELDGLSEIEEFKVSPLLQDSLSARGFVQQKTPVSVTKTSSERKIAAYFVKKSG.

The 47-residue stretch at 13–59 (IDRLSALPEHLLCRILSELSTKDSVRTSVLSKHWRNLWLHVPVLELE) folds into the F-box domain.

The chain is F-box protein At1g60400 from Arabidopsis thaliana (Mouse-ear cress).